The following is a 116-amino-acid chain: Cysteine-rich venom protein Cau1 (116 aa).

The SCP domain maps to 4 to 42 (SYAVVGHYTQIVWYKSDRIGCAAAYCPSSVYNYFYVCQY). Cystine bridges form between Cys24–Cys40, Cys62–Cys69, Cys65–Cys74, Cys87–Cys105, and Cys96–Cys109. The region spanning 78–111 (CRVEDEFINCKDMAESRDCQDNYMMTNCAAFCSC) is the ShKT domain.

Belongs to the CRISP family. As to expression, expressed by the venom gland.

The protein localises to the secreted. Blocks contraction of smooth muscle elicited by high potassium-induced depolarization, but does not block caffeine-stimulated contraction. May target voltage-gated calcium channels on smooth muscle. The sequence is that of Cysteine-rich venom protein Cau1 from Causus rhombeatus (Rhombic night adder).